Reading from the N-terminus, the 90-residue chain is Small ribosomal subunit protein bS18 (90 aa).

It belongs to the bacterial ribosomal protein bS18 family. Part of the 30S ribosomal subunit. Forms a tight heterodimer with protein bS6.

In terms of biological role, binds as a heterodimer with protein bS6 to the central domain of the 16S rRNA, where it helps stabilize the platform of the 30S subunit. The polypeptide is Small ribosomal subunit protein bS18 (Bacteroides fragilis (strain YCH46)).